The primary structure comprises 365 residues: Saoe class I histocompatibility antigen, C alpha chain (365 aa).

A signal peptide spans 1-24; sequence MTIMAPRTLLLLLSGALSVTETWA. Positions 25 to 114 are alpha-1; it reads GSHSMRYFST…LLGYYNQSEA (90 aa). Residues 25–308 are Extracellular-facing; the sequence is GSHSMRYFST…EPPSQPTIPI (284 aa). Residue Asn110 is glycosylated (N-linked (GlcNAc...) asparagine). The interval 115–206 is alpha-2; sequence GFHTIQWMYG…ENGKEMLQRA (92 aa). Cystine bridges form between Cys125–Cys188 and Cys227–Cys283. An alpha-3 region spans residues 207–298; that stretch reads EPPKTHVTHH…GLPEPFTLRW (92 aa). The Ig-like C1-type domain occupies 209 to 297; it reads PKTHVTHHPV…EGLPEPFTLR (89 aa). The interval 299 to 308 is connecting peptide; that stretch reads EPPSQPTIPI. The chain crosses the membrane as a helical span at residues 309–332; it reads MGIVAILAILGAVVTGAVVAAVMW. Over 333 to 365 the chain is Cytoplasmic; that stretch reads RKKSSDKKGGSYSQAARSDSAQGSDVSLTACKV. The interval 337-365 is disordered; that stretch reads SDKKGGSYSQAARSDSAQGSDVSLTACKV. The segment covering 346–359 has biased composition (polar residues); it reads QAARSDSAQGSDVS. Phosphoserine occurs at positions 356 and 359.

It belongs to the MHC class I family. In terms of assembly, heterodimer of an alpha chain and a beta chain (beta-2-microglobulin).

The protein resides in the membrane. Its function is as follows. Involved in the presentation of foreign antigens to the immune system. This is Saoe class I histocompatibility antigen, C alpha chain from Saguinus oedipus (Cotton-top tamarin).